The sequence spans 149 residues: Macrodomain Ter protein (149 aa).

This sequence belongs to the MatP family. As to quaternary structure, homodimer.

The protein resides in the cytoplasm. Its function is as follows. Required for spatial organization of the terminus region of the chromosome (Ter macrodomain) during the cell cycle. Prevents early segregation of duplicated Ter macrodomains during cell division. Binds specifically to matS, which is a 13 bp signature motif repeated within the Ter macrodomain. The chain is Macrodomain Ter protein from Vibrio vulnificus (strain YJ016).